The chain runs to 748 residues: Cysteine--tRNA ligase, cytoplasmic (748 aa).

A disordered region spans residues M1–K25. Residue C55 participates in Zn(2+) binding. Residue G56 participates in L-cysteine binding. The 'HIGH' region signature appears at P57–H67. L-cysteine is bound at residue T96. The 'KIIK' region motif lies at K101–K104. Residues C348, H373, and E377 each contribute to the Zn(2+) site. H373 contributes to the L-cysteine binding site. Positions K406–S410 match the 'KMSKS' region motif. Residue K409 coordinates ATP. Composition is skewed to basic and acidic residues over residues K656–K679 and P686–S717. Positions K656–G719 are disordered.

It belongs to the class-I aminoacyl-tRNA synthetase family. In terms of assembly, homodimer. The cofactor is Zn(2+).

The protein localises to the cytoplasm. The catalysed reaction is tRNA(Cys) + L-cysteine + ATP = L-cysteinyl-tRNA(Cys) + AMP + diphosphate. In terms of biological role, catalyzes the ATP-dependent ligation of cysteine to tRNA(Cys). This Gallus gallus (Chicken) protein is Cysteine--tRNA ligase, cytoplasmic (CARS1).